The following is an 865-amino-acid chain: MESASASEENEGGAAIEECVSRIPVPRPPSIEEFTIVKPISRGAFGKVYLGQKGGKLYAVKVVKKADMINKNMTHQVQAERDALALSKSPFVVHLYYSLQSASNIYLIMEYLIGGDVKSLLHIYGYFDEEMAIKYISEVALALDYLHRHGIIHRDLKPDNMLISNEGHIKLTDFGLSKVTLNRDINMMDILTTPSMSKPKQDYSRTPGQVLSLISSLGFFTPVGEKDQDSANMFSAPKSAAQLSRGFICPMSVDQKEPTSYSSKLLKSCFETLSSNPEIPVKCLTSNLLQCRKRLGTSSTSSQSHTFVSSVESECHSNPKWERDCQSTESSGCAMSWNAVEMLYAKSTSAIKTKTELELALSPIHDSSAIPAAGSNQVTLPRKCFREISWEARDPDNENMTIDKGQSGFCQSSQRSVNSSATSEEHLGKRNYKRNFHLVDSSPCQEIMQSKKNCTEYEANKERQGCRANQSTGLTTEVQNLKLSGCESQQLDYANKENIVTYLTDRQTPEKLHIPTIAKNLMSELDEDCELSSKKDCLSSNSVCSDEDRALKTTCVDSDSSFPGVSMMESSLEIQALEPDKSIRDYSFEEPNTEDLFVLPKCQENSLPQDDCHACIQDSSQVSAHPSKAPKALTSKINVVAFRSFNSHINASTNSEPSKISITSLDAMDISCDYSGSYPMAVSPTEKGRHYTSHQTPNQVKLGTSYRTPKSVRRGAAPVDDGRILGTPDYLAPELLLGTAHGPAVDWWALGVCLFEFLTGIPPFNDETPQQVFQNILKRDIPWPEGEEKLSDNAQSAMDMLLTIDDSKRAGMRELKQHPLFSEVDWENLQHQTMPFVPQPDDETDTSYFEARNNAQHLTISGFSL.

M1 carries the post-translational modification N-acetylmethionine. The region spanning 34 to 821 (FTIVKPISRG…MRELKQHPLF (788 aa)) is the Protein kinase domain. ATP-binding positions include 40–48 (ISRGAFGKV) and K61. The active-site Proton acceptor is D155. Residues T206 and T221 each carry the phosphothreonine modification. Phosphoserine occurs at positions 362 and 442. T508 is subject to Phosphothreonine. Residues S545, S619, S644, and S655 each carry the phosphoserine modification. Phosphothreonine is present on T708. Phosphoserine is present on S711. Position 727 is a phosphothreonine; by CDK1 (T727). Residues 822 to 865 (SEVDWENLQHQTMPFVPQPDDETDTSYFEARNNAQHLTISGFSL) enclose the AGC-kinase C-terminal domain. Phosphoserine is present on residues S861 and S864.

The protein belongs to the protein kinase superfamily. AGC Ser/Thr protein kinase family. In terms of processing, phosphorylation at Thr-727 by CDK1 during M phase activates its kinase activity. Maximum phosphorylation occurs in prometaphase.

It is found in the cytoplasm. The protein resides in the cytoskeleton. Its subcellular location is the microtubule organizing center. It localises to the centrosome. The protein localises to the nucleus. It catalyses the reaction L-seryl-[protein] + ATP = O-phospho-L-seryl-[protein] + ADP + H(+). The catalysed reaction is L-threonyl-[protein] + ATP = O-phospho-L-threonyl-[protein] + ADP + H(+). Functionally, serine/threonine kinase that plays a key role in M phase by acting as a regulator of mitosis entry and maintenance. Acts by promoting the inactivation of protein phosphatase 2A (PP2A) during M phase: does not directly inhibit PP2A but acts by mediating phosphorylation and subsequent activation of ARPP19 and ENSA at 'Ser-62' and 'Ser-67', respectively. ARPP19 and ENSA are phosphatase inhibitors that specifically inhibit the PPP2R2D (PR55-delta) subunit of PP2A. Inactivation of PP2A during M phase is essential to keep cyclin-B1-CDK1 activity high. Following DNA damage, it is also involved in checkpoint recovery by being inhibited. In Mus musculus (Mouse), this protein is Serine/threonine-protein kinase greatwall (Mastl).